Consider the following 579-residue polypeptide: uncharacterized protein (579 aa).

Transmembrane regions (helical) follow at residues Asp13–Ile35, Ser39–Asn61, Ala66–Phe83, Ala93–Leu110, Leu130–Leu152, Ile162–Ile181, Leu201–Ala223, Tyr238–Leu257, Gly264–Thr286, Ile296–Met315, and Leu324–Ala346.

The protein localises to the cell membrane. This is an uncharacterized protein from Pasteurella multocida (strain Pm70).